Reading from the N-terminus, the 273-residue chain is 4-hydroxy-tetrahydrodipicolinate reductase (273 aa).

NAD(+)-binding positions include 8–13, Glu-34, 102–104, and 128–131; these read GCAGNM, GTT, and SPNM. The active-site Proton donor/acceptor is the His-161. His-162 lines the (S)-2,3,4,5-tetrahydrodipicolinate pocket. Lys-165 (proton donor) is an active-site residue. 171–172 contributes to the (S)-2,3,4,5-tetrahydrodipicolinate binding site; the sequence is GT.

It belongs to the DapB family.

It localises to the cytoplasm. The enzyme catalyses (S)-2,3,4,5-tetrahydrodipicolinate + NAD(+) + H2O = (2S,4S)-4-hydroxy-2,3,4,5-tetrahydrodipicolinate + NADH + H(+). The catalysed reaction is (S)-2,3,4,5-tetrahydrodipicolinate + NADP(+) + H2O = (2S,4S)-4-hydroxy-2,3,4,5-tetrahydrodipicolinate + NADPH + H(+). The protein operates within amino-acid biosynthesis; L-lysine biosynthesis via DAP pathway; (S)-tetrahydrodipicolinate from L-aspartate: step 4/4. Catalyzes the conversion of 4-hydroxy-tetrahydrodipicolinate (HTPA) to tetrahydrodipicolinate. The chain is 4-hydroxy-tetrahydrodipicolinate reductase from Methanosphaera stadtmanae (strain ATCC 43021 / DSM 3091 / JCM 11832 / MCB-3).